We begin with the raw amino-acid sequence, 217 residues long: Resolvase homolog YneB (217 aa).

One can recognise a Resolvase/invertase-type recombinase catalytic domain in the interval K2–G147. The O-(5'-phospho-DNA)-serine intermediate role is filled by S10.

It belongs to the site-specific recombinase resolvase family.

The polypeptide is Resolvase homolog YneB (yneB) (Bacillus subtilis (strain 168)).